A 454-amino-acid polypeptide reads, in one-letter code: Diaminobutyrate--2-oxoglutarate aminotransferase (454 aa).

Lys-287 is subject to N6-(pyridoxal phosphate)lysine.

The protein belongs to the class-III pyridoxal-phosphate-dependent aminotransferase family. It depends on pyridoxal 5'-phosphate as a cofactor.

The catalysed reaction is L-2,4-diaminobutanoate + 2-oxoglutarate = L-aspartate 4-semialdehyde + L-glutamate. It functions in the pathway amine and polyamine biosynthesis; 1,3-diaminopropane biosynthesis; 1,3-diaminopropane from L-aspartate 4-semialdehyde: step 1/2. In Haemophilus influenzae (strain ATCC 51907 / DSM 11121 / KW20 / Rd), this protein is Diaminobutyrate--2-oxoglutarate aminotransferase (dat).